A 232-amino-acid chain; its full sequence is Lipid A 1-phosphatase (232 aa).

A run of 6 helical transmembrane segments spans residues 10–30, 42–62, 80–100, 136–156, 160–180, and 183–203; these read LFIT…PVGA, ELLT…LLFF, ALYV…SGLL, FPSG…LLFP, VAFI…GAHY, and DVIA…IVYA.

Belongs to the lipid A LpxE 1-phosphatase family.

The protein resides in the cell inner membrane. Its pathway is bacterial outer membrane biogenesis; LPS lipid A biosynthesis. Its function is as follows. Probably removes the 1-phosphate moiety from lipid A species. Does not seem to act on other membrane components, nor does it dephosphorylate the 4'-phosphate group of lipid A and/or lipid A precursors. In Rhizobium etli (strain ATCC 51251 / DSM 11541 / JCM 21823 / NBRC 15573 / CFN 42), this protein is Lipid A 1-phosphatase.